The sequence spans 348 residues: Organic solute transporter alpha-like protein 3 (348 aa).

Residues 1–49 (MAKEHGAMRSVLNLIGSVMLPQDTSNCSDRHDTPSAPEFLSHLQPFQTV) are Extracellular-facing. A glycan (N-linked (GlcNAc...) asparagine) is linked at asparagine 26. The chain crosses the membrane as a helical span at residues 50–70 (LLSIASFSTTIVLCLSLIHWF). The Cytoplasmic segment spans residues 71-84 (YVYKYVSIEKRRNK). The helical transmembrane segment at 85-105 (LYWLIAVFPVACSCSFIAMCV) threads the bilayer. Topologically, residues 106-109 (PRTA) are extracellular. The chain crosses the membrane as a helical span at residues 110–130 (VILTCIGVLYYLMCLFVIVSL). The Cytoplasmic segment spans residues 131–180 (ARHLFGGRESFSTCLQYDDRPIDFRSPPFCCIIPKLPTARSTEKNIRRLE). The helical transmembrane segment at 181–201 (WCVLQAPIVRSIIIFLDVVAV) threads the bilayer. Over 202-213 (AEMREDATPYIR) the chain is Extracellular. A helical transmembrane segment spans residues 214 to 234 (YSDMASLCSLLLAIFGVHTLA). The Cytoplasmic segment spans residues 235–240 (RVTSNK). Residues 241-261 (LSAYCFMSMFRLVDISLLFFS) form a helical membrane-spanning segment. Topologically, residues 262-291 (AQQPMIFQNVLLRFNLISCGPLLNAQENAY) are extracellular. Residues 292–312 (FVCNFIITCEMLLLSVLATWL) form a helical membrane-spanning segment. Topologically, residues 313 to 348 (LAPRHNAMFDAYRPSMALSETTASLNETEQSMILDH) are cytoplasmic.

It belongs to the OST-alpha family.

The protein resides in the cell membrane. Probable transporter. The protein is Organic solute transporter alpha-like protein 3 (osta-3) of Caenorhabditis elegans.